Here is a 167-residue protein sequence, read N- to C-terminus: Lipoprotein signal peptidase (167 aa).

4 helical membrane passes run 5 to 25 (ICSTGLRWLWLVVVVLILDLG), 42 to 62 (LIPYFNLTYAQNFGAAFSFLA), 70 to 90 (WFFAFIAVAISVVLMVMMYRA), and 102 to 122 (ALIIGGALGNLFDRLVHGFVI). Residues D123 and D141 contribute to the active site. Residues 137-157 (FNIADMAICIGAGLVIIDSFL) traverse the membrane as a helical segment.

Belongs to the peptidase A8 family.

The protein resides in the cell inner membrane. The catalysed reaction is Release of signal peptides from bacterial membrane prolipoproteins. Hydrolyzes -Xaa-Yaa-Zaa-|-(S,diacylglyceryl)Cys-, in which Xaa is hydrophobic (preferably Leu), and Yaa (Ala or Ser) and Zaa (Gly or Ala) have small, neutral side chains.. It functions in the pathway protein modification; lipoprotein biosynthesis (signal peptide cleavage). Functionally, this protein specifically catalyzes the removal of signal peptides from prolipoproteins. The protein is Lipoprotein signal peptidase of Photorhabdus laumondii subsp. laumondii (strain DSM 15139 / CIP 105565 / TT01) (Photorhabdus luminescens subsp. laumondii).